A 194-amino-acid chain; its full sequence is uncharacterized protein (194 aa).

This is an uncharacterized protein from Tomato ringspot virus (isolate raspberry) (ToRSV).